A 375-amino-acid chain; its full sequence is N-acetyldiaminopimelate deacetylase (375 aa).

Asp-69 is a catalytic residue. Glu-128 functions as the Proton acceptor in the catalytic mechanism.

The protein belongs to the peptidase M20A family. N-acetyldiaminopimelate deacetylase subfamily.

The catalysed reaction is N-acetyl-(2S,6S)-2,6-diaminopimelate + H2O = (2S,6S)-2,6-diaminopimelate + acetate. The protein operates within amino-acid biosynthesis; L-lysine biosynthesis via DAP pathway; LL-2,6-diaminopimelate from (S)-tetrahydrodipicolinate (acetylase route): step 3/3. Functionally, catalyzes the conversion of N-acetyl-diaminopimelate to diaminopimelate and acetate. This chain is N-acetyldiaminopimelate deacetylase, found in Priestia megaterium (strain ATCC 12872 / QMB1551) (Bacillus megaterium).